Reading from the N-terminus, the 343-residue chain is GTPase Obg (343 aa).

The region spanning 1–159 is the Obg domain; the sequence is MKYIDEVKIQ…FELKLELRVL (159 aa). The 175-residue stretch at 160-334 folds into the OBG-type G domain; sequence ADVGLLGLPN…LTYAIMGYLE (175 aa). Residues 166-173, 191-195, 213-216, 284-287, and 315-317 each bind GTP; these read GLPNAGKS, FTTLY, DIPG, NKVD, and SAL. Mg(2+)-binding residues include S173 and T193.

It belongs to the TRAFAC class OBG-HflX-like GTPase superfamily. OBG GTPase family. Monomer. The cofactor is Mg(2+).

It localises to the cytoplasm. An essential GTPase which binds GTP, GDP and possibly (p)ppGpp with moderate affinity, with high nucleotide exchange rates and a fairly low GTP hydrolysis rate. Plays a role in control of the cell cycle, stress response, ribosome biogenesis and in those bacteria that undergo differentiation, in morphogenesis control. This Nitrosomonas eutropha (strain DSM 101675 / C91 / Nm57) protein is GTPase Obg.